The chain runs to 293 residues: 4-hydroxy-tetrahydrodipicolinate synthase (293 aa).

T45 provides a ligand contact to pyruvate. The active-site Proton donor/acceptor is the Y133. K161 serves as the catalytic Schiff-base intermediate with substrate. Pyruvate is bound at residue I203.

The protein belongs to the DapA family. In terms of assembly, homotetramer; dimer of dimers.

It is found in the cytoplasm. It carries out the reaction L-aspartate 4-semialdehyde + pyruvate = (2S,4S)-4-hydroxy-2,3,4,5-tetrahydrodipicolinate + H2O + H(+). The protein operates within amino-acid biosynthesis; L-lysine biosynthesis via DAP pathway; (S)-tetrahydrodipicolinate from L-aspartate: step 3/4. Catalyzes the condensation of (S)-aspartate-beta-semialdehyde [(S)-ASA] and pyruvate to 4-hydroxy-tetrahydrodipicolinate (HTPA). This is 4-hydroxy-tetrahydrodipicolinate synthase from Pseudoalteromonas atlantica (strain T6c / ATCC BAA-1087).